The sequence spans 536 residues: CTP synthase (536 aa).

Positions 1–268 (MKSKFIFITG…GKVLCKLFNI (268 aa)) are amidoligase domain. Ser14 provides a ligand contact to CTP. Position 14 (Ser14) interacts with UTP. 15 to 20 (SLGKGL) is a binding site for ATP. Tyr55 contributes to the L-glutamine binding site. Asp72 lines the ATP pocket. Mg(2+)-binding residues include Asp72 and Glu142. Residues 149–151 (DIE), 189–194 (KTKPMQ), and Lys225 contribute to the CTP site. UTP-binding positions include 189-194 (KTKPMQ) and Lys225. Positions 293–535 (TIALVGKYVE…IKAAVDNKIN (243 aa)) constitute a Glutamine amidotransferase type-1 domain. Position 356 (Gly356) interacts with L-glutamine. Cys383 serves as the catalytic Nucleophile; for glutamine hydrolysis. L-glutamine is bound by residues 384-387 (LGMQ), Glu407, and Arg463. Catalysis depends on residues His508 and Glu510.

It belongs to the CTP synthase family. Homotetramer.

It carries out the reaction UTP + L-glutamine + ATP + H2O = CTP + L-glutamate + ADP + phosphate + 2 H(+). The enzyme catalyses L-glutamine + H2O = L-glutamate + NH4(+). The catalysed reaction is UTP + NH4(+) + ATP = CTP + ADP + phosphate + 2 H(+). It functions in the pathway pyrimidine metabolism; CTP biosynthesis via de novo pathway; CTP from UDP: step 2/2. With respect to regulation, allosterically activated by GTP, when glutamine is the substrate; GTP has no effect on the reaction when ammonia is the substrate. The allosteric effector GTP functions by stabilizing the protein conformation that binds the tetrahedral intermediate(s) formed during glutamine hydrolysis. Inhibited by the product CTP, via allosteric rather than competitive inhibition. In terms of biological role, catalyzes the ATP-dependent amination of UTP to CTP with either L-glutamine or ammonia as the source of nitrogen. Regulates intracellular CTP levels through interactions with the four ribonucleotide triphosphates. This chain is CTP synthase, found in Treponema denticola (strain ATCC 35405 / DSM 14222 / CIP 103919 / JCM 8153 / KCTC 15104).